Reading from the N-terminus, the 740-residue chain is ATP-dependent RNA helicase DDX1 (740 aa).

A necessary for interaction with HNRNPK region spans residues 1–295 (MAAFSEMGVM…APKALIVEPS (295 aa)). The segment at 1–448 (MAAFSEMGVM…DTVHHVVVPV (448 aa)) is interaction with dsRNA. Positions 1–525 (MAAFSEMGVM…KIDCDNLEQY (525 aa)) are necessary for interaction with RELA. In terms of domain architecture, Helicase ATP-binding spans 2–428 (AAFSEMGVMP…SEKIMHFPTW (427 aa)). 46 to 53 (AETGSGKT) provides a ligand contact to ATP. Residues 70 to 247 (DQQEGKKGKA…LKFNFGEEEF (178 aa)) form the B30.2/SPRY domain. Lysine 239 and lysine 268 each carry N6-acetyllysine. Lysine 281 bears the N6-acetyllysine; alternate mark. Lysine 281 participates in a covalent cross-link: Glycyl lysine isopeptide (Lys-Gly) (interchain with G-Cter in SUMO2); alternate. The DEAD box signature appears at 370–373 (DEAD). Serine 481 is modified (phosphoserine). One can recognise a Helicase C-terminal domain in the interval 493–681 (KGEYAVRAIK…QVEPDIKVPV (189 aa)). The segment at 525 to 740 (YFMQQGGGPD…YLPNQLFRTF (216 aa)) is necessary for interaction with HNRNPK.

Belongs to the DEAD box helicase family. DDX1 subfamily. As to quaternary structure, found in a multi-helicase-TICAM1 complex at least composed of DHX36, DDX1, DDX21 and TICAM1; this complex exists in resting cells with or without poly(I:C) RNA ligand stimulation. Interacts with DHX36. Interacts (via B30.2/SPRY domain) with DDX21 (via N-terminus); this interaction serves as bridges to TICAM1. Interacts with FAM98A (via N- and C-terminus). Interacts with PHF5A (via C-terminus). Interacts with MBNL1. Interacts with CSTF2. Interacts with HNRNPK. Interacts with ATM. Interacts with RELA (via C-terminus). Component of the tRNA-splicing ligase complex. Interacts with PQBP1. Interacts with ERCC6. Post-translationally, phosphorylated by ATM kinase; phosphorylation is increased in response to ionizing radiation (IR).

The protein resides in the nucleus. It is found in the cytoplasm. The protein localises to the cytoplasmic granule. It localises to the cytosol. Its subcellular location is the mitochondrion. The catalysed reaction is ATP + H2O = ADP + phosphate + H(+). In terms of biological role, acts as an ATP-dependent RNA helicase, able to unwind both RNA-RNA and RNA-DNA duplexes. Possesses 5' single-stranded RNA overhang nuclease activity. Possesses ATPase activity on various RNA, but not DNA polynucleotides. May play a role in RNA clearance at DNA double-strand breaks (DSBs), thereby facilitating the template-guided repair of transcriptionally active regions of the genome. Together with RELA, acts as a coactivator to enhance NF-kappa-B-mediated transcriptional activation. Acts as a positive transcriptional regulator of cyclin CCND2 expression. Binds to the cyclin CCND2 promoter region. Associates with chromatin at the NF-kappa-B promoter region via association with RELA. Binds to poly(A) RNA. May be involved in 3'-end cleavage and polyadenylation of pre-mRNAs. Component of the tRNA-splicing ligase complex required to facilitate the enzymatic turnover of catalytic subunit RTCB: together with archease (ZBTB8OS), acts by facilitating the guanylylation of RTCB, a key intermediate step in tRNA ligation. Component of a multi-helicase-TICAM1 complex that acts as a cytoplasmic sensor of viral double-stranded RNA (dsRNA) and plays a role in the activation of a cascade of antiviral responses including the induction of pro-inflammatory cytokines via the adapter molecule TICAM1. Specifically binds (via helicase ATP-binding domain) on both short and long poly(I:C) dsRNA. The protein is ATP-dependent RNA helicase DDX1 (Ddx1) of Rattus norvegicus (Rat).